The primary structure comprises 388 residues: Succinate--CoA ligase [ADP-forming] subunit beta (388 aa).

One can recognise an ATP-grasp domain in the interval 9 to 244 (KQLFARYGLP…PSQEDSREAH (236 aa)). ATP contacts are provided by residues lysine 46, 53–55 (GRG), glutamate 99, threonine 102, and glutamate 107. 2 residues coordinate Mg(2+): asparagine 199 and aspartate 213. Substrate contacts are provided by residues asparagine 264 and 321–323 (GIV).

This sequence belongs to the succinate/malate CoA ligase beta subunit family. Heterotetramer of two alpha and two beta subunits. Mg(2+) serves as cofactor.

It carries out the reaction succinate + ATP + CoA = succinyl-CoA + ADP + phosphate. The catalysed reaction is GTP + succinate + CoA = succinyl-CoA + GDP + phosphate. It functions in the pathway carbohydrate metabolism; tricarboxylic acid cycle; succinate from succinyl-CoA (ligase route): step 1/1. Functionally, succinyl-CoA synthetase functions in the citric acid cycle (TCA), coupling the hydrolysis of succinyl-CoA to the synthesis of either ATP or GTP and thus represents the only step of substrate-level phosphorylation in the TCA. The beta subunit provides nucleotide specificity of the enzyme and binds the substrate succinate, while the binding sites for coenzyme A and phosphate are found in the alpha subunit. The polypeptide is Succinate--CoA ligase [ADP-forming] subunit beta (Pectobacterium carotovorum subsp. carotovorum (strain PC1)).